The chain runs to 96 residues: Co-chaperonin GroES (96 aa).

The protein belongs to the GroES chaperonin family. As to quaternary structure, heptamer of 7 subunits arranged in a ring. Interacts with the chaperonin GroEL.

Its subcellular location is the cytoplasm. Together with the chaperonin GroEL, plays an essential role in assisting protein folding. The GroEL-GroES system forms a nano-cage that allows encapsulation of the non-native substrate proteins and provides a physical environment optimized to promote and accelerate protein folding. GroES binds to the apical surface of the GroEL ring, thereby capping the opening of the GroEL channel. This is Co-chaperonin GroES from Leptospira borgpetersenii serovar Hardjo-bovis (strain JB197).